We begin with the raw amino-acid sequence, 229 residues long: B-cell antigen receptor complex-associated protein beta chain (229 aa).

A signal peptide spans 1–28 (MARLALSPVPSHWMVALLLLLSAEPVPA). At 29 to 159 (ARSEDRYRNP…QLKQRNTLKD (131 aa)) the chain is on the extracellular side. One can recognise an Ig-like V-type domain in the interval 38–138 (PKGSACSRIW…TSEVYQGCGT (101 aa)). Cystine bridges form between Cys43-Cys126 and Cys65-Cys122. N-linked (GlcNAc...) asparagine glycosylation is found at Asn73, Asn101, Asn127, and Asn128. A helical membrane pass occupies residues 160 to 180 (GIIMIQTLLIILFIIVPIFLL). Topologically, residues 181–229 (LDKDDSKAGMEEDHTYEGLDIDQTATYEDIVTLRTGEVKWSVGEHPGQE) are cytoplasmic. The ITAM domain maps to 185–213 (DSKAGMEEDHTYEGLDIDQTATYEDIVTL). Tyr196 and Tyr207 each carry phosphotyrosine; by SRC-type Tyr-kinases.

Heterodimer of alpha and beta chains; disulfide-linked. Part of the B-cell antigen receptor complex where the alpha/beta chain heterodimer is non-covalently associated with an antigen-specific membrane-bound surface immunoglobulin of two heavy chains and two light chains. Interacts with LYN. Phosphorylated on tyrosine upon B-cell activation by SRC-type Tyr-kinases such as BLK, LYN and SYK. B-cells.

The protein resides in the cell membrane. In terms of biological role, required in cooperation with CD79A for initiation of the signal transduction cascade activated by the B-cell antigen receptor complex (BCR) which leads to internalization of the complex, trafficking to late endosomes and antigen presentation. Enhances phosphorylation of CD79A, possibly by recruiting kinases which phosphorylate CD79A or by recruiting proteins which bind to CD79A and protect it from dephosphorylation. The chain is B-cell antigen receptor complex-associated protein beta chain (CD79B) from Homo sapiens (Human).